The sequence spans 386 residues: Histidinol-phosphate aminotransferase (386 aa).

Positions 1 to 11 (MMVRKSTASNR) are enriched in polar residues. Residues 1 to 22 (MMVRKSTASNRRLQDKGDEEPV) are disordered. Lysine 248 carries the N6-(pyridoxal phosphate)lysine modification.

It belongs to the class-II pyridoxal-phosphate-dependent aminotransferase family. Histidinol-phosphate aminotransferase subfamily. Homodimer. Pyridoxal 5'-phosphate is required as a cofactor.

The catalysed reaction is L-histidinol phosphate + 2-oxoglutarate = 3-(imidazol-4-yl)-2-oxopropyl phosphate + L-glutamate. The protein operates within amino-acid biosynthesis; L-histidine biosynthesis; L-histidine from 5-phospho-alpha-D-ribose 1-diphosphate: step 7/9. This Moorella thermoacetica (strain ATCC 39073 / JCM 9320) protein is Histidinol-phosphate aminotransferase.